The following is a 1422-amino-acid chain: DNA-directed RNA polymerase subunit beta (1422 aa).

The tract at residues Gln-1392–Ala-1422 is disordered.

The protein belongs to the RNA polymerase beta chain family. The RNAP catalytic core consists of 2 alpha, 1 beta, 1 beta' and 1 omega subunit. When a sigma factor is associated with the core the holoenzyme is formed, which can initiate transcription.

It catalyses the reaction RNA(n) + a ribonucleoside 5'-triphosphate = RNA(n+1) + diphosphate. In terms of biological role, DNA-dependent RNA polymerase catalyzes the transcription of DNA into RNA using the four ribonucleoside triphosphates as substrates. The chain is DNA-directed RNA polymerase subunit beta from Anaeromyxobacter dehalogenans (strain 2CP-C).